The following is a 429-amino-acid chain: Ribosomal RNA small subunit methyltransferase B (429 aa).

Residues 254–260, aspartate 277, aspartate 303, and aspartate 322 each bind S-adenosyl-L-methionine; that span reads CAAPGGK. Cysteine 375 acts as the Nucleophile in catalysis. The tract at residues 397-419 is disordered; sequence ALSETGTPDQPGQQNLPGGEEGD. Positions 400 to 412 are enriched in polar residues; it reads ETGTPDQPGQQNL.

Belongs to the class I-like SAM-binding methyltransferase superfamily. RsmB/NOP family.

It localises to the cytoplasm. It catalyses the reaction cytidine(967) in 16S rRNA + S-adenosyl-L-methionine = 5-methylcytidine(967) in 16S rRNA + S-adenosyl-L-homocysteine + H(+). Functionally, specifically methylates the cytosine at position 967 (m5C967) of 16S rRNA. The sequence is that of Ribosomal RNA small subunit methyltransferase B from Salmonella newport (strain SL254).